We begin with the raw amino-acid sequence, 725 residues long: Ribonuclease R (725 aa).

The region spanning 264 to 592 (RQDLTDLAFV…IHRLLWMHLF (329 aa)) is the RNB domain. One can recognise an S1 motif domain in the interval 644 to 725 (GKTFSGFISA…IQKRAILTLI (82 aa)).

Belongs to the RNR ribonuclease family. RNase R subfamily.

The protein resides in the cytoplasm. It catalyses the reaction Exonucleolytic cleavage in the 3'- to 5'-direction to yield nucleoside 5'-phosphates.. 3'-5' exoribonuclease that releases 5'-nucleoside monophosphates and is involved in maturation of structured RNAs. The sequence is that of Ribonuclease R from Mycoplasma genitalium (strain ATCC 33530 / DSM 19775 / NCTC 10195 / G37) (Mycoplasmoides genitalium).